Consider the following 454-residue polypeptide: uncharacterized protein (454 aa).

A signal peptide spans 1 to 18 (MRRFTLFVFFLSISIAYA).

This is an uncharacterized protein from Caenorhabditis elegans.